The primary structure comprises 328 residues: Phosphatidylglycerol--prolipoprotein diacylglyceryl transferase (328 aa).

The next 3 membrane-spanning stretches (helical) occupy residues Val-15 to Ser-35, Phe-58 to Tyr-78, and Gly-106 to Thr-126. Residue Arg-156 coordinates a 1,2-diacyl-sn-glycero-3-phospho-(1'-sn-glycerol). 2 helical membrane-spanning segments follow: residues Gly-242–Leu-262 and Ile-289–Val-309.

Belongs to the Lgt family.

The protein resides in the cell inner membrane. It carries out the reaction L-cysteinyl-[prolipoprotein] + a 1,2-diacyl-sn-glycero-3-phospho-(1'-sn-glycerol) = an S-1,2-diacyl-sn-glyceryl-L-cysteinyl-[prolipoprotein] + sn-glycerol 1-phosphate + H(+). It participates in protein modification; lipoprotein biosynthesis (diacylglyceryl transfer). Functionally, catalyzes the transfer of the diacylglyceryl group from phosphatidylglycerol to the sulfhydryl group of the N-terminal cysteine of a prolipoprotein, the first step in the formation of mature lipoproteins. This Borrelia garinii subsp. bavariensis (strain ATCC BAA-2496 / DSM 23469 / PBi) (Borreliella bavariensis) protein is Phosphatidylglycerol--prolipoprotein diacylglyceryl transferase.